We begin with the raw amino-acid sequence, 151 residues long: Large ribosomal subunit protein bL9 (151 aa).

Belongs to the bacterial ribosomal protein bL9 family.

In terms of biological role, binds to the 23S rRNA. This is Large ribosomal subunit protein bL9 from Thermosipho melanesiensis (strain DSM 12029 / CIP 104789 / BI429).